The sequence spans 203 residues: UDP-N-acetylglucosamine transferase subunit ALG13 (203 aa).

This sequence belongs to the glycosyltransferase 28 family. Heterodimer with ALG14 to form a functional enzyme.

It is found in the endoplasmic reticulum. It catalyses the reaction an N-acetyl-alpha-D-glucosaminyl-diphospho-di-trans,poly-cis-dolichol + UDP-N-acetyl-alpha-D-glucosamine = an N,N'-diacetylchitobiosyl-diphospho-di-trans,poly-cis-dolichol + UDP + H(+). In terms of biological role, involved in protein N-glycosylation. Essential for the second step of the dolichol-linked oligosaccharide pathway. This Eremothecium gossypii (strain ATCC 10895 / CBS 109.51 / FGSC 9923 / NRRL Y-1056) (Yeast) protein is UDP-N-acetylglucosamine transferase subunit ALG13 (ALG13).